Reading from the N-terminus, the 107-residue chain is MMKVLVVIALLVTLISYSSSEGIDDLEADELLSLMANEQTRKECIPKHHECTSNKHGCCRGNFFKYKCQCTTVVTQDGEQTERCFCGTPPHHKAAELVVGFGKKIFG.

An N-terminal signal peptide occupies residues 1–20 (MMKVLVVIALLVTLISYSSS). A propeptide spanning residues 21-41 (EGIDDLEADELLSLMANEQTR) is cleaved from the precursor. Cystine bridges form between cysteine 44/cysteine 59, cysteine 51/cysteine 68, cysteine 58/cysteine 86, and cysteine 70/cysteine 84.

It belongs to the neurotoxin 19 (CSTX) family. 04 (U1-Lctx) subfamily. Expressed by the venom gland.

The protein resides in the secreted. This Lycosa singoriensis (Wolf spider) protein is U1-lycotoxin-Ls1b.